The primary structure comprises 432 residues: Monooxygenase penA (432 aa).

A helical membrane pass occupies residues phenylalanine 7–proline 29. The N-linked (GlcNAc...) asparagine glycan is linked to asparagine 33.

It belongs to the aromatic-ring hydroxylase family. Requires FAD as cofactor.

It is found in the membrane. It participates in secondary metabolite biosynthesis. It functions in the pathway alkaloid biosynthesis. Its pathway is mycotoxin biosynthesis. Functionally, monooxygenase; part of the gene cluster that mediates the biosynthesis of penigequinolones, potent insecticidal alkaloids that contain a highly modified 10-carbon prenyl group. The first stage is catalyzed by the nonribosomal peptide synthetase penN that condenses anthranilic acid and O-methyl-L-tyrosine to produce 4'-methoxycyclopeptin. 4'-methoxycyclopeptin is then converted to 4'-methoxydehydrocyclopeptin by the ketoglutarate-dependent dioxygenase penM through dehydrogenation to form a double bond between C-alpha and C-beta of the O-methyltyrosine side chain. PenM also converts its first product methoxydehydrocyclopeptin to 4'-methoxycyclopenin. The following conversion of 4'methoxycyclopenin into 4'-methoxyviridicatin is catalyzed by the cyclopenase penL. 4'-methoxyviridicatin is the precursor of quinolone natural products, and is further converted to quinolinone B. The prenyltransferase penI then catalyzes the canonical Friedel-Crafts alkylation of quinolinone B with dimethylallyl cation to yield dimethylallyl quinolone, which is subjected to FAD-dependent dehydrogenation by the FAD-linked oxidoreductase penH to yield conjugated aryl diene. The delta(3') double bond then serves as the site of the second alkylation with DMAPP catalyzed by the prenyltransferase penG to yield a carbenium ion intermediate, which can be attacked by H(2)O to yield a styrenyl quinolone containing a C3'-hydroxyprenyl chain, or undergo cyclization to yield yaequinolones J1 and J2. The conversion of the styrenyl quinolone into the tetrahydrofuran-containing yaequinolone C is performed by the FAD-dependent monooxygenase penE and involves epoxidation of the terminal C7'-C8' olefin, followed by epoxide ring opening initiated by the C3' hydroxyl group. The predicted cysteine hydrolase penJ acts as an epoxide hydrolase that enhances the rate of the 5-exo-tet cyclization step, increasing the yield of yaequinolone C. PenF catalyzes the cationic rearrangement of the epoxide formed by penE (before ring opening to produce yaequinolone C) into yaequinolone D. Finally, the short-chain dehydrogenase/reductase (SDR)-like reductase penD, catalyzes both the dehydration of yaequinolone D and the reduction of the resulting oxonium to yield penigequinolone. This Penicillium thymicola protein is Monooxygenase penA.